The following is a 936-amino-acid chain: 2-oxoglutarate dehydrogenase E1 component (936 aa).

Belongs to the alpha-ketoglutarate dehydrogenase family. As to quaternary structure, homodimer. Part of the 2-oxoglutarate dehydrogenase (OGDH) complex composed of E1 (2-oxoglutarate dehydrogenase), E2 (dihydrolipoamide succinyltransferase) and E3 (dihydrolipoamide dehydrogenase); the complex contains multiple copies of the three enzymatic components (E1, E2 and E3). The cofactor is thiamine diphosphate.

It catalyses the reaction N(6)-[(R)-lipoyl]-L-lysyl-[protein] + 2-oxoglutarate + H(+) = N(6)-[(R)-S(8)-succinyldihydrolipoyl]-L-lysyl-[protein] + CO2. Its function is as follows. E1 component of the 2-oxoglutarate dehydrogenase (OGDH) complex which catalyzes the decarboxylation of 2-oxoglutarate, the first step in the conversion of 2-oxoglutarate to succinyl-CoA and CO(2). The sequence is that of 2-oxoglutarate dehydrogenase E1 component (sucA) from Rickettsia prowazekii (strain Madrid E).